The primary structure comprises 168 residues: Protein OPG162 (168 aa).

The helical transmembrane segment at 15 to 37 threads the bilayer; that stretch reads LSVPAAIMMLLSTIISGIGTFLH. 2 disulfide bridges follow: C75–C162 and C141–C154. An N-linked (GlcNAc...) asparagine; by host glycan is attached at N133.

It belongs to the orthopoxvirus OPG162 protein family. Interacts with protein OPG161. Interacts with protein OPG164. Interacts with protein OPG190.

It is found in the virion membrane. It localises to the host Golgi apparatus. Forms a complex with OPG162 and OPG190 to coordinate the incorporation of OPG164 into wrapped enveloped virion (EV) membranes and, subsequently, the production of actin tails. Therefore plays an essential role in efficient cell-to-cell spread of viral particles. The protein is Protein OPG162 (OPG162) of Monkeypox virus.